The following is a 374-amino-acid chain: DNA replication and repair protein RecF (374 aa).

An ATP-binding site is contributed by 30-37; the sequence is GENAQGKT.

The protein belongs to the RecF family.

It localises to the cytoplasm. The RecF protein is involved in DNA metabolism; it is required for DNA replication and normal SOS inducibility. RecF binds preferentially to single-stranded, linear DNA. It also seems to bind ATP. The protein is DNA replication and repair protein RecF of Pediococcus pentosaceus (strain ATCC 25745 / CCUG 21536 / LMG 10740 / 183-1w).